A 455-amino-acid chain; its full sequence is Bifunctional protein GlmU (455 aa).

A pyrophosphorylase region spans residues 1–226 (MSLDIVILAA…AMEVQGANDR (226 aa)). Residues 8-11 (LAAG), K22, Q73, 78-79 (GT), 99-101 (YGD), G136, E151, N166, and N224 each bind UDP-N-acetyl-alpha-D-glucosamine. Residue D101 coordinates Mg(2+). Mg(2+) is bound at residue N224. The tract at residues 227-247 (RQLSELERHYQLREGRRLMAQ) is linker. The N-acetyltransferase stretch occupies residues 248 to 455 (GVTLRDPARF…WKRPEKIKKS (208 aa)). UDP-N-acetyl-alpha-D-glucosamine contacts are provided by R330 and K348. The Proton acceptor role is filled by H360. UDP-N-acetyl-alpha-D-glucosamine-binding residues include Y363 and N374. Residues A377, 383-384 (NY), S402, A420, and R437 contribute to the acetyl-CoA site.

This sequence in the N-terminal section; belongs to the N-acetylglucosamine-1-phosphate uridyltransferase family. The protein in the C-terminal section; belongs to the transferase hexapeptide repeat family. Homotrimer. Requires Mg(2+) as cofactor.

Its subcellular location is the cytoplasm. The catalysed reaction is alpha-D-glucosamine 1-phosphate + acetyl-CoA = N-acetyl-alpha-D-glucosamine 1-phosphate + CoA + H(+). It catalyses the reaction N-acetyl-alpha-D-glucosamine 1-phosphate + UTP + H(+) = UDP-N-acetyl-alpha-D-glucosamine + diphosphate. It functions in the pathway nucleotide-sugar biosynthesis; UDP-N-acetyl-alpha-D-glucosamine biosynthesis; N-acetyl-alpha-D-glucosamine 1-phosphate from alpha-D-glucosamine 6-phosphate (route II): step 2/2. It participates in nucleotide-sugar biosynthesis; UDP-N-acetyl-alpha-D-glucosamine biosynthesis; UDP-N-acetyl-alpha-D-glucosamine from N-acetyl-alpha-D-glucosamine 1-phosphate: step 1/1. Its pathway is bacterial outer membrane biogenesis; LPS lipid A biosynthesis. Catalyzes the last two sequential reactions in the de novo biosynthetic pathway for UDP-N-acetylglucosamine (UDP-GlcNAc). The C-terminal domain catalyzes the transfer of acetyl group from acetyl coenzyme A to glucosamine-1-phosphate (GlcN-1-P) to produce N-acetylglucosamine-1-phosphate (GlcNAc-1-P), which is converted into UDP-GlcNAc by the transfer of uridine 5-monophosphate (from uridine 5-triphosphate), a reaction catalyzed by the N-terminal domain. In Pseudomonas putida (strain ATCC 700007 / DSM 6899 / JCM 31910 / BCRC 17059 / LMG 24140 / F1), this protein is Bifunctional protein GlmU.